The following is a 196-amino-acid chain: 3-isopropylmalate dehydratase small subunit (196 aa).

The protein belongs to the LeuD family. LeuD type 1 subfamily. Heterodimer of LeuC and LeuD.

The enzyme catalyses (2R,3S)-3-isopropylmalate = (2S)-2-isopropylmalate. It functions in the pathway amino-acid biosynthesis; L-leucine biosynthesis; L-leucine from 3-methyl-2-oxobutanoate: step 2/4. Functionally, catalyzes the isomerization between 2-isopropylmalate and 3-isopropylmalate, via the formation of 2-isopropylmaleate. The protein is 3-isopropylmalate dehydratase small subunit of Corynebacterium efficiens (strain DSM 44549 / YS-314 / AJ 12310 / JCM 11189 / NBRC 100395).